Reading from the N-terminus, the 81-residue chain is Mu/omega-theraphotoxin-Hs1a (81 aa).

Residues methionine 1–alanine 21 form the signal peptide. Residues serine 22–arginine 48 constitute a propeptide that is removed on maturation. Disulfide bonds link cysteine 50/cysteine 65, cysteine 57/cysteine 70, and cysteine 64/cysteine 77.

The protein belongs to the neurotoxin 10 (Hwtx-1) family. 23 (HwTx-I) subfamily. Expressed by the venom gland.

Its subcellular location is the secreted. In terms of biological role, lethal toxin with multiple biological activities. Inhibits voltage-gated TTX-sensitive sodium channels in DRG neurons (IC(50)=55 nM) and also shows activity when directly tested on Nav1.7/SCN9A (IC(50)=25.1-630 nM). Inhibits N-type calcium channels (Cav2.2/CACNA1B (IC(50)=100 nM)). Also blocks neuromuscular transmission. In vivo, intrathecal injected toxin shows analgesic activity in the rat formalin-induced pain model, without induction of motor dysfunction in rats. This Cyriopagopus schmidti (Chinese bird spider) protein is Mu/omega-theraphotoxin-Hs1a.